A 127-amino-acid chain; its full sequence is Protein ApaG (127 aa).

The ApaG domain occupies 3–127; sequence DDPRYRVEVE…FVLSVPRTLH (125 aa).

The protein is Protein ApaG of Xanthomonas oryzae pv. oryzae (strain MAFF 311018).